A 55-amino-acid polypeptide reads, in one-letter code: Spermatid nuclear transition protein 1 (55 aa).

The span at 1-42 shows a compositional bias: basic residues; sequence MSTSRKLKTHGMRRGKNRAPHKGVKRGGSKRKYRKSVLKSRK. A disordered region spans residues 1 to 55; sequence MSTSRKLKTHGMRRGKNRAPHKGVKRGGSKRKYRKSVLKSRKRGDDASRNYRSHL. Residues Ser-36 and Ser-40 each carry the phosphoserine modification.

Belongs to the nuclear transition protein 1 family. Testis-specific.

It is found in the nucleus. The protein localises to the chromosome. In terms of biological role, plays a key role in the replacement of histones to protamine in the elongating spermatids of mammals. In condensing spermatids, loaded onto the nucleosomes, where it promotes the recruitment and processing of protamines, which are responsible for histone eviction. The histone H2AB1-H2BC1/TH2B dimer is required for loading of TNP1 onto chromatin. This chain is Spermatid nuclear transition protein 1, found in Mus musculus (Mouse).